Reading from the N-terminus, the 500-residue chain is Lysine--tRNA ligase (500 aa).

Residues E402 and E409 each contribute to the Mg(2+) site.

Belongs to the class-II aminoacyl-tRNA synthetase family. In terms of assembly, homodimer. Mg(2+) is required as a cofactor.

The protein localises to the cytoplasm. It catalyses the reaction tRNA(Lys) + L-lysine + ATP = L-lysyl-tRNA(Lys) + AMP + diphosphate. The sequence is that of Lysine--tRNA ligase from Buchnera aphidicola subsp. Baizongia pistaciae (strain Bp).